The sequence spans 234 residues: 2,3,4,5-tetrahydropyridine-2,6-dicarboxylate N-acetyltransferase (234 aa).

It belongs to the transferase hexapeptide repeat family. DapH subfamily.

The enzyme catalyses (S)-2,3,4,5-tetrahydrodipicolinate + acetyl-CoA + H2O = L-2-acetamido-6-oxoheptanedioate + CoA. It functions in the pathway amino-acid biosynthesis; L-lysine biosynthesis via DAP pathway; LL-2,6-diaminopimelate from (S)-tetrahydrodipicolinate (acetylase route): step 1/3. Its function is as follows. Catalyzes the transfer of an acetyl group from acetyl-CoA to tetrahydrodipicolinate. In Ligilactobacillus salivarius (strain UCC118) (Lactobacillus salivarius), this protein is 2,3,4,5-tetrahydropyridine-2,6-dicarboxylate N-acetyltransferase.